A 93-amino-acid polypeptide reads, in one-letter code: UPF0367 protein ssl1972 (93 aa).

The protein belongs to the UPF0367 family.

In Synechocystis sp. (strain ATCC 27184 / PCC 6803 / Kazusa), this protein is UPF0367 protein ssl1972.